A 76-amino-acid chain; its full sequence is Probable 26S proteasome complex subunit dss-1 (76 aa).

2 disordered regions span residues 1 to 28 (MSSTTVTKKDQKTVVEKKETEEEEFEEF) and 52 to 76 (DDETHESEFSKQLKEELRKGGHPIA). Basic and acidic residues-rich tracts occupy residues 7 to 20 (TKKDQKTVVEKKET) and 57 to 70 (ESEFSKQLKEELRK).

It belongs to the DSS1/SEM1 family. In terms of assembly, part of the 26S proteasome.

It is found in the nucleus. The protein resides in the cytoplasm. In terms of biological role, subunit of the 26S proteasome which plays a role in ubiquitin-dependent proteolysis. Has an essential role in oogenesis and larval growth. Required for intestinal function and default lifespan. This chain is Probable 26S proteasome complex subunit dss-1, found in Caenorhabditis briggsae.